Here is a 264-residue protein sequence, read N- to C-terminus: tRNA (guanine-N(1)-)-methyltransferase (264 aa).

Residues Gly125 and 145–150 contribute to the S-adenosyl-L-methionine site; that span reads LGDFVL.

It belongs to the RNA methyltransferase TrmD family. Homodimer.

Its subcellular location is the cytoplasm. The enzyme catalyses guanosine(37) in tRNA + S-adenosyl-L-methionine = N(1)-methylguanosine(37) in tRNA + S-adenosyl-L-homocysteine + H(+). In terms of biological role, specifically methylates guanosine-37 in various tRNAs. This chain is tRNA (guanine-N(1)-)-methyltransferase, found in Burkholderia ambifaria (strain ATCC BAA-244 / DSM 16087 / CCUG 44356 / LMG 19182 / AMMD) (Burkholderia cepacia (strain AMMD)).